The primary structure comprises 109 residues: Class I hydrophobin dewE (109 aa).

Residues 1 to 20 form the signal peptide; sequence MKVATALSVLAVAGSALASA. 4 cysteine pairs are disulfide-bonded: cysteine 34–cysteine 87, cysteine 40–cysteine 81, cysteine 41–cysteine 74, and cysteine 88–cysteine 102.

It belongs to the fungal hydrophobin family. As to quaternary structure, self-assembles to form functional amyloid fibrils called rodlets. Self-assembly into fibrillar rodlets occurs spontaneously at hydrophobic:hydrophilic interfaces and the rodlets further associate laterally to form amphipathic monolayers.

Its subcellular location is the secreted. The protein resides in the spore wall. Aerial growth, conidiation, and dispersal of filamentous fungi in the environment rely upon a capability of their secreting small amphipathic proteins called hydrophobins (HPBs) with low sequence identity. Class I can self-assemble into an outermost layer of rodlet bundles on aerial cell surfaces, conferring cellular hydrophobicity that supports fungal growth, development and dispersal; whereas Class II form highly ordered films at water-air interfaces through intermolecular interactions but contribute nothing to the rodlet structure. DewE is a class I hydrophobin that contributes to the hydrophobicity of the spore surface. The polypeptide is Class I hydrophobin dewE (Emericella nidulans (strain FGSC A4 / ATCC 38163 / CBS 112.46 / NRRL 194 / M139) (Aspergillus nidulans)).